Consider the following 164-residue polypeptide: 3-isopropylmalate dehydratase small subunit (164 aa).

Belongs to the LeuD family. LeuD type 2 subfamily. In terms of assembly, heterodimer of LeuC and LeuD.

It carries out the reaction (2R,3S)-3-isopropylmalate = (2S)-2-isopropylmalate. Its pathway is amino-acid biosynthesis; L-leucine biosynthesis; L-leucine from 3-methyl-2-oxobutanoate: step 2/4. Functionally, catalyzes the isomerization between 2-isopropylmalate and 3-isopropylmalate, via the formation of 2-isopropylmaleate. This Lachnospira eligens (strain ATCC 27750 / DSM 3376 / VPI C15-48 / C15-B4) (Eubacterium eligens) protein is 3-isopropylmalate dehydratase small subunit.